A 429-amino-acid chain; its full sequence is Glutamate-1-semialdehyde 2,1-aminomutase 2 (429 aa).

Lys-268 is subject to N6-(pyridoxal phosphate)lysine.

The protein belongs to the class-III pyridoxal-phosphate-dependent aminotransferase family. HemL subfamily. In terms of assembly, homodimer. Pyridoxal 5'-phosphate is required as a cofactor.

The protein resides in the cytoplasm. It catalyses the reaction (S)-4-amino-5-oxopentanoate = 5-aminolevulinate. It functions in the pathway porphyrin-containing compound metabolism; protoporphyrin-IX biosynthesis; 5-aminolevulinate from L-glutamyl-tRNA(Glu): step 2/2. The polypeptide is Glutamate-1-semialdehyde 2,1-aminomutase 2 (Geobacillus kaustophilus (strain HTA426)).